A 338-amino-acid chain; its full sequence is GDSL esterase/lipase At5g63170 (338 aa).

An N-terminal signal peptide occupies residues 1–23 (MNSLVIQTTIVLVSVISVSIVHA). The active-site Nucleophile is the serine 35. Active-site residues include aspartate 313 and histidine 316.

This sequence belongs to the 'GDSL' lipolytic enzyme family.

The protein resides in the secreted. This chain is GDSL esterase/lipase At5g63170, found in Arabidopsis thaliana (Mouse-ear cress).